Here is a 325-residue protein sequence, read N- to C-terminus: Gibberellin 20-oxidase-like protein (325 aa).

Residues 152–266 (CHGYFRINNY…RFSLAFFWCF (115 aa)) form the Fe2OG dioxygenase domain. His-186, Asp-188, and His-244 together coordinate Fe cation. Position 257 (Arg-257) interacts with 2-oxoglutarate.

The protein belongs to the iron/ascorbate-dependent oxidoreductase family. GA20OX subfamily. Fe(2+) is required as a cofactor. Highly expressed in elongation zone of lateral roots.

Functionally, negative regulator of root hair growth. In Arabidopsis thaliana (Mouse-ear cress), this protein is Gibberellin 20-oxidase-like protein.